We begin with the raw amino-acid sequence, 329 residues long: Tetraacyldisaccharide 4'-kinase (329 aa).

Residue 58 to 65 participates in ATP binding; sequence SVGGTGKT.

The protein belongs to the LpxK family.

It carries out the reaction a lipid A disaccharide + ATP = a lipid IVA + ADP + H(+). Its pathway is glycolipid biosynthesis; lipid IV(A) biosynthesis; lipid IV(A) from (3R)-3-hydroxytetradecanoyl-[acyl-carrier-protein] and UDP-N-acetyl-alpha-D-glucosamine: step 6/6. Functionally, transfers the gamma-phosphate of ATP to the 4'-position of a tetraacyldisaccharide 1-phosphate intermediate (termed DS-1-P) to form tetraacyldisaccharide 1,4'-bis-phosphate (lipid IVA). The polypeptide is Tetraacyldisaccharide 4'-kinase (Idiomarina loihiensis (strain ATCC BAA-735 / DSM 15497 / L2-TR)).